The following is a 505-amino-acid chain: Deoxyguanosinetriphosphate triphosphohydrolase (505 aa).

The HD domain occupies 66–273 (RLTHSMEVQQ…MEAADDISYC (208 aa)).

The protein belongs to the dGTPase family. Type 1 subfamily. Homotetramer. It depends on Mg(2+) as a cofactor.

The catalysed reaction is dGTP + H2O = 2'-deoxyguanosine + triphosphate + H(+). Its activity is regulated as follows. Inhibited by the action of reducing agents such as dithiothreitol and 2-mercaptoethanol. Its function is as follows. dGTPase preferentially hydrolyzes dGTP over the other canonical NTPs. The chain is Deoxyguanosinetriphosphate triphosphohydrolase from Shigella boydii.